Here is a 505-residue protein sequence, read N- to C-terminus: Flagellin (505 aa).

It belongs to the bacterial flagellin family.

It is found in the secreted. Its subcellular location is the bacterial flagellum. Flagellin is the subunit protein which polymerizes to form the filaments of bacterial flagella. This Salmonella enteritidis protein is Flagellin (fliC).